A 570-amino-acid polypeptide reads, in one-letter code: Methionine--tRNA ligase (570 aa).

A 'HIGH' region motif is present at residues 11-21 (PYVQTVPHLGN). Zn(2+)-binding residues include cysteine 143, cysteine 146, cysteine 156, and cysteine 159. The short motif at 333-337 (KFSKS) is the 'KMSKS' region element. Lysine 336 serves as a coordination point for ATP.

This sequence belongs to the class-I aminoacyl-tRNA synthetase family. MetG type 1 subfamily. Requires Zn(2+) as cofactor.

It is found in the cytoplasm. It carries out the reaction tRNA(Met) + L-methionine + ATP = L-methionyl-tRNA(Met) + AMP + diphosphate. In terms of biological role, is required not only for elongation of protein synthesis but also for the initiation of all mRNA translation through initiator tRNA(fMet) aminoacylation. This Pyrobaculum aerophilum (strain ATCC 51768 / DSM 7523 / JCM 9630 / CIP 104966 / NBRC 100827 / IM2) protein is Methionine--tRNA ligase.